The sequence spans 261 residues: Oxidoreductase ptaF (261 aa).

The protein belongs to the avfA family.

It participates in secondary metabolite biosynthesis. In terms of biological role, oxidoreductase; part of the gene cluster that mediates the biosynthesis of pestheic acid, a diphenyl ether which is a biosynthetic precursor of the unique chloropupukeananes. The biosynthesis initiates from condensation of acetate and malonate units catalyzed by the non-reducing PKS ptaA. As the ptaA protein is TE/CLC domain-deficient, hydrolysis and Claisen cyclization of the polyketide could be catalyzed by ptaB containing a beta-lactamase domain. The ptaB protein might hydrolyze the thioester bond between the ACP of ptaA and the intermediate to release atrochrysone carboxylic acid, which is spontaneously dehydrated to form endocrocin anthrone. Endocrocin anthrone is then converted to endocrocin, catalyzed by the anthrone oxygenase ptaC. Spontaneous decarboxylation of endocrocin occurs to generate emodin. An O-methyltransferase (ptaH or ptaI) could methylate emodin to form physcion. PtaJ could then catalyze the oxidative cleavage of physcion, and rotation of the intermediate could then afford desmethylisosulochrin. PtaF, a putative NADH-dependent oxidoreductase, might also participate in the oxidative cleavage step. Desmethylisosulochrin is then transformed by another O-methyltransferase (ptaH or ptaI) to form isosulochrin. Chlorination of isosulochrin by ptaM in the cyclohexadienone B ring then produces chloroisosulochrin. PtaE is responsible for the oxidative coupling reactions of both benzophenones isosulouchrin and chloroisosulochrin to RES-1214-1 and pestheic acid respectively, regardless of chlorination. This chain is Oxidoreductase ptaF, found in Pestalotiopsis fici (strain W106-1 / CGMCC3.15140).